The following is a 447-amino-acid chain: Argininosuccinate synthase (447 aa).

ATP-binding positions include 17–25 and alanine 43; that span reads AFSGGLDTS. Tyrosine 99 contacts L-citrulline. Residues glycine 129 and threonine 131 each contribute to the ATP site. Threonine 131, asparagine 135, and aspartate 136 together coordinate L-aspartate. Asparagine 135 contributes to the L-citrulline binding site. ATP is bound at residue aspartate 136. Arginine 139 and serine 192 together coordinate L-citrulline. Aspartate 194 is a binding site for ATP. The L-citrulline site is built by threonine 201, glutamate 203, and glutamate 280.

The protein belongs to the argininosuccinate synthase family. Type 2 subfamily. As to quaternary structure, homotetramer.

Its subcellular location is the cytoplasm. The catalysed reaction is L-citrulline + L-aspartate + ATP = 2-(N(omega)-L-arginino)succinate + AMP + diphosphate + H(+). Its pathway is amino-acid biosynthesis; L-arginine biosynthesis; L-arginine from L-ornithine and carbamoyl phosphate: step 2/3. The sequence is that of Argininosuccinate synthase from Klebsiella pneumoniae subsp. pneumoniae (strain ATCC 700721 / MGH 78578).